The chain runs to 242 residues: Placenta-expressed transcript 1 protein (242 aa).

Residues 1–26 (MAILRSLLLPLGLLLCLWLLCSPASC) form the signal peptide. At 27–220 (TNSTTNCKPF…TTHKSSANRA (194 aa)) the chain is on the extracellular side. Asparagine 28, asparagine 81, and asparagine 106 each carry an N-linked (GlcNAc...) asparagine glycan. A disordered region spans residues 162 to 209 (VITTPTHKPTPAPPKPTTNPQKTTTNHSIPTTSLPKPTTSLYTSHPKL). Positions 169-178 (KPTPAPPKPT) are enriched in pro residues. Low complexity predominate over residues 179–205 (TNPQKTTTNHSIPTTSLPKPTTSLYTS). A helical membrane pass occupies residues 221–241 (FLCPVREAIQILFIFLIGTLL). Residue phenylalanine 242 is a topological domain, cytoplasmic.

Post-translationally, N-glycosylated.

The protein resides in the membrane. It localises to the apical cell membrane. Functionally, modulates leading keratinocyte migration and cellular adhesion to matrix proteins during a wound-healing response and promotes wound repair. May play a role during trichilemmal differentiation of the hair follicle. In Bos taurus (Bovine), this protein is Placenta-expressed transcript 1 protein (PLET1).